Reading from the N-terminus, the 184-residue chain is UPS-like protein C36.10 (184 aa).

Residues 1–172 (MKIFESCHLF…VLEKINMSVF (172 aa)) form the PRELI/MSF1 domain.

The protein belongs to the slowmo family.

It is found in the cytoplasm. The protein localises to the mitochondrion inner membrane. Its subcellular location is the mitochondrion intermembrane space. In terms of biological role, required for mitochondrial morphology. May control phospholipid metabolism in the mitochondrial intermembrane space. This is UPS-like protein C36.10 from Schizosaccharomyces pombe (strain 972 / ATCC 24843) (Fission yeast).